The primary structure comprises 186 residues: MTLTPEDRTIILDSIRDIPDFPKPGIVFKDITTLLNNPKALSTLMDHLTERYLGYDLDYIAGIDARGFIFGSILADRLGVGFVPVRKKGKLPYTTVAEKYSLEYGFDEVEIHIDAFGENGCCSTGERSKVLLIDDLIATGGTAKAAANLIDKVGAHCVEACFIMELGFLNSKEGFSAPVYSVLEID.

The protein belongs to the purine/pyrimidine phosphoribosyltransferase family. In terms of assembly, homodimer.

Its subcellular location is the cytoplasm. The catalysed reaction is AMP + diphosphate = 5-phospho-alpha-D-ribose 1-diphosphate + adenine. It functions in the pathway purine metabolism; AMP biosynthesis via salvage pathway; AMP from adenine: step 1/1. Functionally, catalyzes a salvage reaction resulting in the formation of AMP, that is energically less costly than de novo synthesis. This chain is Adenine phosphoribosyltransferase, found in Sulfurovum sp. (strain NBC37-1).